A 458-amino-acid polypeptide reads, in one-letter code: MSLAIWQECLAQLKDELSAGDFSTWLRPLQADFNHSTLSLYSPNKYTSEWVRNKYMATIEDKVQQLVNQENPNHSVKIRLMVGNVSSVEKKPAKQIPTQAPLTNQPWEGESKAHRVPHKSNLIKKYTFDNFVEGKSNNFAIATTQQIAENPGDVYNPLFLYAHPGLGKTHLLHAVGNAILAENPESKVVYIRSERFVQDMINSIRNNTIEQFKEYYASLDALLIDDIHFFAGKDRSQEVLFQTFNSMLDAHQQVILTSDRFPKEIEGIDERLRTRFGWGLSIPIDPPELETRVAILITKAEERGLKLPDDVAFFIAKRLTITDVRVLEGAIANISAKAQFTGQGITISLVQDALRDMLAVHTKQTTIDNIQKIVAQHYRIKISDMSSKRRTRTVARPRQIAMALAKELTQHSLPEIGEAFGGRDHTTVLHACRKVQELRRENNDIQEDYKILIRTLSM.

The segment at 1–79 is domain I, interacts with DnaA modulators; sequence MSLAIWQECL…ENPNHSVKIR (79 aa). The domain II stretch occupies residues 79-120; the sequence is RLMVGNVSSVEKKPAKQIPTQAPLTNQPWEGESKAHRVPHKS. The segment at 92–114 is disordered; sequence PAKQIPTQAPLTNQPWEGESKAH. Polar residues predominate over residues 96-106; sequence IPTQAPLTNQP. The segment at 121-338 is domain III, AAA+ region; that stretch reads NLIKKYTFDN…GAIANISAKA (218 aa). G165, G167, K168, and T169 together coordinate ATP. Residues 339 to 458 form a domain IV, binds dsDNA region; it reads QFTGQGITIS…YKILIRTLSM (120 aa).

It belongs to the DnaA family. In terms of assembly, oligomerizes as a right-handed, spiral filament on DNA at oriC.

The protein resides in the cytoplasm. In terms of biological role, plays an essential role in the initiation and regulation of chromosomal replication. ATP-DnaA binds to the origin of replication (oriC) to initiate formation of the DNA replication initiation complex once per cell cycle. Binds the DnaA box (a 9 base pair repeat at the origin) and separates the double-stranded (ds)DNA. Forms a right-handed helical filament on oriC DNA; dsDNA binds to the exterior of the filament while single-stranded (ss)DNA is stabiized in the filament's interior. The ATP-DnaA-oriC complex binds and stabilizes one strand of the AT-rich DNA unwinding element (DUE), permitting loading of DNA polymerase. After initiation quickly degrades to an ADP-DnaA complex that is not apt for DNA replication. Binds acidic phospholipids. This chain is Chromosomal replication initiator protein DnaA, found in Psychromonas ingrahamii (strain DSM 17664 / CCUG 51855 / 37).